The primary structure comprises 217 residues: MIKTVNIYDNPVLGVFATCTEDVAIVPIGTAGKAIDLLAEQLDVKVISTLINGSIVVGSLSKGNSNGFLISRDANVSDLKDVEVPVEVLPDMLTAVGNVILANDTAALVHPEMTDSSIEVISRVLGVDVHRGTIAGLGTVGMAGVVTNRGLLVHPMVTPDELSVLEDVFALPIELGTTNYGSQAVGSGLLANSKGYVAGSNTTGHELGRVEDALFFA.

Belongs to the eIF-6 family.

Its function is as follows. Binds to the 50S ribosomal subunit and prevents its association with the 30S ribosomal subunit to form the 70S initiation complex. This Methanococcoides burtonii (strain DSM 6242 / NBRC 107633 / OCM 468 / ACE-M) protein is Translation initiation factor 6.